Here is a 132-residue protein sequence, read N- to C-terminus: Small ribosomal subunit protein uS8 (132 aa).

The protein belongs to the universal ribosomal protein uS8 family. Part of the 30S ribosomal subunit. Contacts proteins S5 and S12.

One of the primary rRNA binding proteins, it binds directly to 16S rRNA central domain where it helps coordinate assembly of the platform of the 30S subunit. The polypeptide is Small ribosomal subunit protein uS8 (Lactococcus lactis subsp. cremoris (strain MG1363)).